Here is a 97-residue protein sequence, read N- to C-terminus: MEAVERIENPYGIRLRIFLQPKASRDQIVGLHDSELKIAITAPPVDGAANAHLLKYLSKLFKVPKSSIVLEKGELQRHKQLFVPEPKLIPKEIEALL.

This sequence belongs to the UPF0235 family.

In Actinobacillus pleuropneumoniae serotype 7 (strain AP76), this protein is UPF0235 protein APP7_1431.